We begin with the raw amino-acid sequence, 82 residues long: RNA-binding protein GTNG_0100 (82 aa).

The protein belongs to the eukaryotic ribosomal protein eL8 family.

This chain is RNA-binding protein GTNG_0100, found in Geobacillus thermodenitrificans (strain NG80-2).